Reading from the N-terminus, the 666-residue chain is Vicilin-like antimicrobial peptides 2-1 (666 aa).

The signal sequence occupies residues 1 to 27; it reads MAINTSNLCSLLFLLSLFLLSTTVSLA. Disordered regions lie at residues 161–191 and 219–254; these read QQKRYEEQQREDEEKYEERMKEEDNKRDPQQ and QQRQHGRGGDMMNPQRGGSGRYEEGEEEQSDNPYYF. Cupin type-1 domains follow at residues 271-410 and 455-625; these read SVLE…EKLR and YNLF…KEVE. Residues 629 to 655 are disordered; it reads NSQDQSIFFPGPRQHQQQSPRSTKQQQ. The segment covering 642-655 has biased composition (low complexity); that stretch reads QHQQQSPRSTKQQQ.

It belongs to the 7S seed storage protein family.

It localises to the secreted. Functionally, antimicrobial peptides 2b, 2c and 2d have antibacterial and antifungal activity against a range of species. This is Vicilin-like antimicrobial peptides 2-1 from Macadamia integrifolia (Macadamia nut).